A 92-amino-acid polypeptide reads, in one-letter code: SPbeta prophage-derived uncharacterized protein YoqM (92 aa).

The signal sequence occupies residues 1 to 25 (MKLRKVLTGSVLSLGLLVSASPAFA).

The polypeptide is SPbeta prophage-derived uncharacterized protein YoqM (yoqM) (Bacillus subtilis (strain 168)).